The sequence spans 244 residues: Uracil phosphoribosyltransferase (244 aa).

GTP contacts are provided by residues Lys-59, Arg-68, and 102-105; that span reads YSKI. Arg-112 contacts 5-phospho-alpha-D-ribose 1-diphosphate. Arg-129 contacts GTP. Position 137 (Arg-137) interacts with 5-phospho-alpha-D-ribose 1-diphosphate. Arg-158 contributes to the GTP binding site. 5-phospho-alpha-D-ribose 1-diphosphate is bound by residues Asp-164 and 164–172; that span reads DPMCATAGS. Uracil-binding positions include Ile-229 and 234–236; that span reads GDF. Asp-235 is a binding site for 5-phospho-alpha-D-ribose 1-diphosphate.

Belongs to the UPRTase family. In terms of assembly, monomer. Forms homodimers in presence of substrates and homotetramers in the presence of GTP. Mg(2+) is required as a cofactor.

It carries out the reaction UMP + diphosphate = 5-phospho-alpha-D-ribose 1-diphosphate + uracil. The protein operates within pyrimidine metabolism; UMP biosynthesis via salvage pathway; UMP from uracil: step 1/1. Its activity is regulated as follows. Allosterically activated by GTP. Binding of GTP leads to 5-time activation of the enzyme. Its function is as follows. Catalyzes the conversion of uracil and 5-phospho-alpha-D-ribose 1-diphosphate (PRPP) to UMP and diphosphate. The sequence is that of Uracil phosphoribosyltransferase (uprt) from Toxoplasma gondii.